Consider the following 130-residue polypeptide: Small ribosomal subunit protein uS9 (130 aa).

This sequence belongs to the universal ribosomal protein uS9 family.

The protein is Small ribosomal subunit protein uS9 (rpsI) of Geobacillus stearothermophilus (Bacillus stearothermophilus).